Here is a 134-residue protein sequence, read N- to C-terminus: ATP synthase epsilon chain, chloroplastic (134 aa).

Belongs to the ATPase epsilon chain family. In terms of assembly, F-type ATPases have 2 components, CF(1) - the catalytic core - and CF(0) - the membrane proton channel. CF(1) has five subunits: alpha(3), beta(3), gamma(1), delta(1), epsilon(1). CF(0) has three main subunits: a, b and c.

It localises to the plastid. Its subcellular location is the chloroplast thylakoid membrane. Functionally, produces ATP from ADP in the presence of a proton gradient across the membrane. In Pelargonium hortorum (Common geranium), this protein is ATP synthase epsilon chain, chloroplastic.